Reading from the N-terminus, the 82-residue chain is Endocuticle structural glycoprotein ABD-5 (82 aa).

Q1 carries the post-translational modification Pyrrolidone carboxylic acid. The 65-residue stretch at 18 to 82 folds into the Chitin-binding type R&amp;R domain; that stretch reads LGQYNFAYRT…ENGYQPRVQS (65 aa).

Functionally, component of the soft endocuticle of migratory locust. The sequence is that of Endocuticle structural glycoprotein ABD-5 from Locusta migratoria (Migratory locust).